We begin with the raw amino-acid sequence, 340 residues long: Glyceraldehyde-3-phosphate dehydrogenase (340 aa).

NAD(+)-binding positions include 11–12 and Gly109; that span reads TI. 138–140 is a binding site for D-glyceraldehyde 3-phosphate; that stretch reads SCN. Cys139 serves as the catalytic Nucleophile. Arg167 is a binding site for NAD(+). 193 to 194 provides a ligand contact to D-glyceraldehyde 3-phosphate; sequence HA. Gln300 contributes to the NAD(+) binding site.

Belongs to the glyceraldehyde-3-phosphate dehydrogenase family. Homotetramer.

It is found in the cytoplasm. The catalysed reaction is D-glyceraldehyde 3-phosphate + phosphate + NADP(+) = (2R)-3-phospho-glyceroyl phosphate + NADPH + H(+). The enzyme catalyses D-glyceraldehyde 3-phosphate + phosphate + NAD(+) = (2R)-3-phospho-glyceroyl phosphate + NADH + H(+). The protein operates within carbohydrate degradation; glycolysis; pyruvate from D-glyceraldehyde 3-phosphate: step 1/5. The sequence is that of Glyceraldehyde-3-phosphate dehydrogenase from Metallosphaera sedula (strain ATCC 51363 / DSM 5348 / JCM 9185 / NBRC 15509 / TH2).